A 340-amino-acid polypeptide reads, in one-letter code: Uroporphyrinogen decarboxylase (340 aa).

Substrate is bound by residues 21–25 (RQAGR), D71, Y148, S203, and H316.

The protein belongs to the uroporphyrinogen decarboxylase family. Homodimer.

The protein resides in the cytoplasm. It carries out the reaction uroporphyrinogen III + 4 H(+) = coproporphyrinogen III + 4 CO2. It participates in porphyrin-containing compound metabolism; protoporphyrin-IX biosynthesis; coproporphyrinogen-III from 5-aminolevulinate: step 4/4. In terms of biological role, catalyzes the decarboxylation of four acetate groups of uroporphyrinogen-III to yield coproporphyrinogen-III. This is Uroporphyrinogen decarboxylase from Campylobacter hominis (strain ATCC BAA-381 / DSM 21671 / CCUG 45161 / LMG 19568 / NCTC 13146 / CH001A).